The chain runs to 874 residues: Bifunctional uridylyltransferase/uridylyl-removing enzyme (874 aa).

Positions 1-332 are uridylyltransferase; sequence MPLQSPLTFS…NGGATENAEI (332 aa). The interval 333 to 692 is uridylyl-removing; the sequence is LDADFQRRGS…ISKKATRGGT (360 aa). The region spanning 451–573 is the HD domain; the sequence is VDEHSIRLLK…VRDEESLEYL (123 aa). 2 ACT domains span residues 693–777 and 800–874; these read EVFV…RTPN and LMEF…AVTA.

Belongs to the GlnD family. Mg(2+) serves as cofactor.

The catalysed reaction is [protein-PII]-L-tyrosine + UTP = [protein-PII]-uridylyl-L-tyrosine + diphosphate. It catalyses the reaction [protein-PII]-uridylyl-L-tyrosine + H2O = [protein-PII]-L-tyrosine + UMP + H(+). With respect to regulation, uridylyltransferase (UTase) activity is inhibited by glutamine, while glutamine activates uridylyl-removing (UR) activity. In terms of biological role, modifies, by uridylylation and deuridylylation, the PII regulatory proteins (GlnB and homologs), in response to the nitrogen status of the cell that GlnD senses through the glutamine level. Under low glutamine levels, catalyzes the conversion of the PII proteins and UTP to PII-UMP and PPi, while under higher glutamine levels, GlnD hydrolyzes PII-UMP to PII and UMP (deuridylylation). Thus, controls uridylylation state and activity of the PII proteins, and plays an important role in the regulation of nitrogen assimilation and metabolism. This is Bifunctional uridylyltransferase/uridylyl-removing enzyme from Vibrio parahaemolyticus serotype O3:K6 (strain RIMD 2210633).